We begin with the raw amino-acid sequence, 438 residues long: Argininosuccinate lyase (438 aa).

It belongs to the lyase 1 family. Argininosuccinate lyase subfamily.

The protein resides in the cytoplasm. The enzyme catalyses 2-(N(omega)-L-arginino)succinate = fumarate + L-arginine. It functions in the pathway amino-acid biosynthesis; L-arginine biosynthesis; L-arginine from L-ornithine and carbamoyl phosphate: step 3/3. This Clostridium kluyveri (strain NBRC 12016) protein is Argininosuccinate lyase.